The following is a 265-amino-acid chain: GTP cyclohydrolase FolE2 (265 aa).

It belongs to the GTP cyclohydrolase IV family.

It carries out the reaction GTP + H2O = 7,8-dihydroneopterin 3'-triphosphate + formate + H(+). The protein operates within cofactor biosynthesis; 7,8-dihydroneopterin triphosphate biosynthesis; 7,8-dihydroneopterin triphosphate from GTP: step 1/1. Functionally, converts GTP to 7,8-dihydroneopterin triphosphate. The sequence is that of GTP cyclohydrolase FolE2 from Magnetococcus marinus (strain ATCC BAA-1437 / JCM 17883 / MC-1).